Here is a 719-residue protein sequence, read N- to C-terminus: Photosystem I P700 chlorophyll a apoprotein A1 (719 aa).

Transmembrane regions (helical) follow at residues 59-82 (VFSA…FHGA), 145-168 (LYCT…FHYH), 184-208 (LNHH…HVSL), 280-298 (TAHH…GHMY), 335-358 (WHAQ…HHMY), 374-400 (LSLF…IFMV), 422-444 (AIVS…LYIH), and 520-538 (FLVH…LILL). Cysteine 562 and cysteine 571 together coordinate [4Fe-4S] cluster. Helical transmembrane passes span 578–599 (HVFL…HFSW) and 653–675 (LSAY…MFLF). Position 664 (histidine 664) interacts with chlorophyll a'. Methionine 672 and tyrosine 680 together coordinate chlorophyll a. Position 681 (tryptophan 681) interacts with phylloquinone. Residues 713 to 719 (AVGVAHY) traverse the membrane as a helical segment.

Belongs to the PsaA/PsaB family. The PsaA/B heterodimer binds the P700 chlorophyll special pair and subsequent electron acceptors. PSI consists of a core antenna complex that captures photons, and an electron transfer chain that converts photonic excitation into a charge separation. The eukaryotic PSI reaction center is composed of at least 11 subunits. P700 is a chlorophyll a/chlorophyll a' dimer, A0 is one or more chlorophyll a, A1 is one or both phylloquinones and FX is a shared 4Fe-4S iron-sulfur center. serves as cofactor.

The protein resides in the plastid. It is found in the chloroplast thylakoid membrane. It catalyses the reaction reduced [plastocyanin] + hnu + oxidized [2Fe-2S]-[ferredoxin] = oxidized [plastocyanin] + reduced [2Fe-2S]-[ferredoxin]. In terms of biological role, psaA and PsaB bind P700, the primary electron donor of photosystem I (PSI), as well as the electron acceptors A0, A1 and FX. PSI is a plastocyanin-ferredoxin oxidoreductase, converting photonic excitation into a charge separation, which transfers an electron from the donor P700 chlorophyll pair to the spectroscopically characterized acceptors A0, A1, FX, FA and FB in turn. Oxidized P700 is reduced on the lumenal side of the thylakoid membrane by plastocyanin. This chain is Photosystem I P700 chlorophyll a apoprotein A1, found in Encephalartos lebomboensis (Lebombo cycad).